We begin with the raw amino-acid sequence, 383 residues long: Processive diacylglycerol beta-glucosyltransferase (383 aa).

Belongs to the glycosyltransferase 28 family. UgtP subfamily.

Its subcellular location is the cell membrane. The catalysed reaction is a 1,2-diacyl-3-O-(beta-D-glucopyranosyl)-sn-glycerol + UDP-alpha-D-glucose = a 1,2-diacyl-3-O-(beta-D-Glc-(1-&gt;6)-beta-D-Glc)-sn-glycerol + UDP + H(+). The enzyme catalyses a 1,2-diacyl-3-O-(beta-D-Glc-(1-&gt;6)-beta-D-Glc)-sn-glycerol + UDP-alpha-D-glucose = a 1,2-diacyl-3-O-(beta-D-Glc-(1-&gt;6)-beta-D-Glc-(1-&gt;6)-beta-D-Glc)-sn-glycerol + UDP + H(+). It carries out the reaction a 1,2-diacyl-sn-glycerol + UDP-alpha-D-glucose = a 1,2-diacyl-3-O-(beta-D-glucopyranosyl)-sn-glycerol + UDP + H(+). It functions in the pathway glycolipid metabolism; diglucosyl-diacylglycerol biosynthesis. In terms of biological role, processive glucosyltransferase involved in the biosynthesis of both the bilayer- and non-bilayer-forming membrane glucolipids. Is able to successively transfer up to three glucosyl residues to diacylglycerol (DAG), thereby catalyzing the formation of beta-monoglucosyl-DAG (3-O-(beta-D-glucopyranosyl)-1,2-diacyl-sn-glycerol), beta-diglucosyl-DAG (3-O-(beta-D-glucopyranosyl-beta-(1-&gt;6)-D-glucopyranosyl)-1,2-diacyl-sn-glycerol) and beta-triglucosyl-DAG (3-O-(beta-D-glucopyranosyl-beta-(1-&gt;6)-D-glucopyranosyl-beta-(1-&gt;6)-D-glucopyranosyl)-1,2-diacyl-sn-glycerol). Beta-diglucosyl-DAG is the predominant glycolipid found in Bacillales and is also used as a membrane anchor for lipoteichoic acid (LTA). This Bacillus pumilus (strain SAFR-032) protein is Processive diacylglycerol beta-glucosyltransferase.